Consider the following 1196-residue polypeptide: Major DNA-binding protein (1196 aa).

Residues 499 to 512 (CNLCTFDTRHACVH) fold into a zinc finger. 2 short sequence motifs (required for filament formation) span residues 843 to 844 (FW) and 1142 to 1144 (FNF). Positions 1158-1196 (GGPGAPGPAFAGRKRAFHGDDPFGEGPPDKKGDLTLDML) are disordered. The tract at residues 1170-1196 (RKRAFHGDDPFGEGPPDKKGDLTLDML) is required for nuclear localization. The segment covering 1174 to 1196 (FHGDDPFGEGPPDKKGDLTLDML) has biased composition (basic and acidic residues).

Belongs to the herpesviridae major DNA-binding protein family. Homooligomers. Forms double-helical filaments necessary for the formation of replication compartments within the host nucleus. Interacts with the origin-binding protein. Interacts with the helicase primase complex; this interaction stimulates primer synthesis activity of the helicase-primase complex. Interacts with the DNA polymerase. Interacts with the alkaline exonuclease; this interaction increases its nuclease processivity.

It is found in the host nucleus. Its function is as follows. Plays several crucial roles in viral infection. Participates in the opening of the viral DNA origin to initiate replication by interacting with the origin-binding protein. May disrupt loops, hairpins and other secondary structures present on ssDNA to reduce and eliminate pausing of viral DNA polymerase at specific sites during elongation. Promotes viral DNA recombination by performing strand-transfer, characterized by the ability to transfer a DNA strand from a linear duplex to a complementary single-stranded DNA circle. Can also catalyze the renaturation of complementary single strands. Additionally, reorganizes the host cell nucleus, leading to the formation of prereplicative sites and replication compartments. This process is driven by the protein which can form double-helical filaments in the absence of DNA. This is Major DNA-binding protein from Human herpesvirus 1 (strain KOS) (HHV-1).